The chain runs to 394 residues: Cell division protein FtsZ (394 aa).

GTP-binding positions include 21–25 (GGGNN), 108–110 (GTG), Glu139, Arg143, and Asp187. The disordered stretch occupies residues 317–394 (DKPSSQGRKA…EERRSRRTRR (78 aa)). Low complexity-rich tracts occupy residues 328–346 (STGFGSSVNSSSNHQSGAS) and 353–364 (SAHTSHSQSSES). Positions 365–388 (VNERSHTTKDDDIPSFIRNREERR) are enriched in basic and acidic residues.

Belongs to the FtsZ family. As to quaternary structure, homodimer. Polymerizes to form a dynamic ring structure in a strictly GTP-dependent manner. Interacts directly with several other division proteins.

It localises to the cytoplasm. In terms of biological role, essential cell division protein that forms a contractile ring structure (Z ring) at the future cell division site. The regulation of the ring assembly controls the timing and the location of cell division. One of the functions of the FtsZ ring is to recruit other cell division proteins to the septum to produce a new cell wall between the dividing cells. Binds GTP and shows GTPase activity. The sequence is that of Cell division protein FtsZ from Staphylococcus epidermidis (strain ATCC 12228 / FDA PCI 1200).